We begin with the raw amino-acid sequence, 183 residues long: Negative modulator of initiation of replication (183 aa).

Residues 43 to 70 (VNDTQPVSAPAPSKAAPSAGNESRPQDR) form a disordered region. Low complexity predominate over residues 50–61 (SAPAPSKAAPSA). 3 interaction with DNA regions span residues 89-90 (AV), 118-122 (RTRIY), and 152-158 (NTNTGRK).

Belongs to the SeqA family. Homodimer. Polymerizes to form helical filaments.

The protein localises to the cytoplasm. Negative regulator of replication initiation, which contributes to regulation of DNA replication and ensures that replication initiation occurs exactly once per chromosome per cell cycle. Binds to pairs of hemimethylated GATC sequences in the oriC region, thus preventing assembly of replication proteins and re-initiation at newly replicated origins. Repression is relieved when the region becomes fully methylated. The polypeptide is Negative modulator of initiation of replication (Pantoea ananatis (strain AJ13355)).